A 168-amino-acid polypeptide reads, in one-letter code: NADH-quinone oxidoreductase subunit B (168 aa).

[4Fe-4S] cluster contacts are provided by C37, C38, C103, and C132.

It belongs to the complex I 20 kDa subunit family. As to quaternary structure, NDH-1 is composed of 14 different subunits. Subunits NuoB, C, D, E, F, and G constitute the peripheral sector of the complex. Requires [4Fe-4S] cluster as cofactor.

The protein localises to the cell inner membrane. The catalysed reaction is a quinone + NADH + 5 H(+)(in) = a quinol + NAD(+) + 4 H(+)(out). NDH-1 shuttles electrons from NADH, via FMN and iron-sulfur (Fe-S) centers, to quinones in the respiratory chain. The immediate electron acceptor for the enzyme in this species is believed to be ubiquinone. Couples the redox reaction to proton translocation (for every two electrons transferred, four hydrogen ions are translocated across the cytoplasmic membrane), and thus conserves the redox energy in a proton gradient. The chain is NADH-quinone oxidoreductase subunit B from Campylobacter fetus subsp. fetus (strain 82-40).